Reading from the N-terminus, the 83-residue chain is Large ribosomal subunit protein bL27c (83 aa).

The disordered stretch occupies residues 1 to 21 (MAHKKGAGSTKNGRDSNAKRL).

Belongs to the bacterial ribosomal protein bL27 family.

The protein resides in the plastid. Its subcellular location is the chloroplast. The polypeptide is Large ribosomal subunit protein bL27c (Phaeodactylum tricornutum (strain CCAP 1055/1)).